The sequence spans 95 residues: Large ribosomal subunit protein bL25 (95 aa).

Belongs to the bacterial ribosomal protein bL25 family. In terms of assembly, part of the 50S ribosomal subunit; part of the 5S rRNA/L5/L18/L25 subcomplex. Contacts the 5S rRNA. Binds to the 5S rRNA independently of L5 and L18.

In terms of biological role, this is one of the proteins that binds to the 5S RNA in the ribosome where it forms part of the central protuberance. The chain is Large ribosomal subunit protein bL25 from Shewanella halifaxensis (strain HAW-EB4).